We begin with the raw amino-acid sequence, 502 residues long: MQVPYLEFDNVSKSFPGVKALQNISFKCYEGKVHALMGENGAGKSTLLKILSGNYLPSEGKLSIGGRQLVFRNTKEALLAGVAIIYQELNIVPEMTVAENLCLGQLPHSFGIVDKAELIERTQQYLDKLDLNISPNTPLKELSIGQWQMIEIAKALSRGAKIIAFDEPTSSLSAPEIEKLFSVINELRDEGKVILYVSHRMEEIFRISDEITVLKDGQFVETFSDLSKITNDDLVRSMVGRNLGDIYHYRPREVGDVRLKIAHLSGEKLQGDFSLTVRAGEVLGLFGLVGAGRSELLKVIFGADPCVSGSIELDGKTLSIRSPKDAIEQGIVLCPEDRKKEGIVPTASVGENINISARRLHNFFKFIINDKWEKKNAEKQRQQMNVKTPSIEQLIVNLSGGNQQKAILGRWLSEDIKVLLLDEPTRGIDVGAKSEIYDLIFKLADQKLAIIVVSSDLPEVIGVSDRIMVMRAHQITGVVERADATEEKVLKLAMVESLNVGD.

ABC transporter domains follow at residues 6–241 (LEFD…MVGR) and 252–497 (REVG…MVES). Residue 38 to 45 (GENGAGKS) coordinates ATP.

The protein belongs to the ABC transporter superfamily. Arabinose importer (TC 3.A.1.2.2) family. As to quaternary structure, the complex is composed of two ATP-binding proteins (AraG), two transmembrane proteins (AraH) and a solute-binding protein (AraF).

The protein localises to the cell inner membrane. The catalysed reaction is L-arabinose(out) + ATP + H2O = L-arabinose(in) + ADP + phosphate + H(+). Functionally, part of the ABC transporter complex AraFGH involved in arabinose import. Responsible for energy coupling to the transport system. This Mannheimia succiniciproducens (strain KCTC 0769BP / MBEL55E) protein is Arabinose import ATP-binding protein AraG.